The chain runs to 301 residues: Oxaloacetate tautomerase YisK (301 aa).

Position 99 (Lys99) interacts with oxalate. Residues Glu148, Glu150, and Asp179 each coordinate Mn(2+). 2 residues coordinate oxalate: Lys196 and Thr266.

It belongs to the FAH family. In terms of assembly, homodimer. Mg(2+) is required as a cofactor. The cofactor is Mn(2+).

The protein localises to the cytoplasm. It carries out the reaction oxaloacetate = enol-oxaloacetate. The catalysed reaction is oxaloacetate + H(+) = pyruvate + CO2. Its function is as follows. Tautomerase that converts enol-oxaloacetate to the keto form of oxaloacetate. Also shows weak oxaloacetate decarboxylase (ODx), catalyzing the decarboxylation of oxaloacetate (OAA) to pyruvate and CO(2). This is Oxaloacetate tautomerase YisK from Bacillus subtilis (strain 168).